We begin with the raw amino-acid sequence, 457 residues long: Serine/threonine-protein phosphatase 2A activator 2 (457 aa).

2 disordered regions span residues 387–407 and 426–457; these read DAHG…GEGQ and AEQE…IPFD. Over residues 391–400 the composition is skewed to basic residues; the sequence is HIHPAGKPHA.

It belongs to the PTPA-type PPIase family.

The protein resides in the cytoplasm. It carries out the reaction [protein]-peptidylproline (omega=180) = [protein]-peptidylproline (omega=0). Its function is as follows. PPIases accelerate the folding of proteins. It catalyzes the cis-trans isomerization of proline imidic peptide bonds in oligopeptides. Acts as a regulatory subunit for PP2A-like phosphatases modulating their activity or substrate specificity, probably by inducing a conformational change in the catalytic subunit, a direct target of the PPIase. Can reactivate inactive phosphatase PP2A-phosphatase methylesterase complexes (PP2Ai) in presence of ATP and Mg(2+) by dissociating the inactive form from the complex. The sequence is that of Serine/threonine-protein phosphatase 2A activator 2 (RRD2) from Mycosarcoma maydis (Corn smut fungus).